We begin with the raw amino-acid sequence, 307 residues long: 2-dehydropantoate 2-reductase (307 aa).

NADP(+)-binding positions include 7 to 12 (GSGAMG), Asn102, and Ala128. Asn102 is a binding site for substrate. Lys184 acts as the Proton donor in catalysis. Residues Asn188, Asn192, and Ser255 each coordinate substrate. Glu268 is an NADP(+) binding site.

Belongs to the ketopantoate reductase family.

It is found in the cytoplasm. It catalyses the reaction (R)-pantoate + NADP(+) = 2-dehydropantoate + NADPH + H(+). The protein operates within cofactor biosynthesis; (R)-pantothenate biosynthesis; (R)-pantoate from 3-methyl-2-oxobutanoate: step 2/2. Functionally, catalyzes the NADPH-dependent reduction of ketopantoate into pantoic acid. The chain is 2-dehydropantoate 2-reductase (apbA) from Streptococcus pyogenes serotype M6 (strain ATCC BAA-946 / MGAS10394).